The sequence spans 656 residues: Leucine aminopeptidase 2 (656 aa).

Substrate contacts are provided by residues 173-175 and 302-307; these read QLE and PYGGME. Histidine 331 contacts Zn(2+). Catalysis depends on glutamate 332, which acts as the Proton acceptor. 2 residues coordinate Zn(2+): histidine 335 and glutamate 354. Tyrosine 420 acts as the Proton donor in catalysis.

The protein belongs to the peptidase M1 family. Requires Zn(2+) as cofactor.

Its subcellular location is the cytoplasm. It is found in the nucleus. It carries out the reaction an epoxide + H2O = an ethanediol. Functionally, aminopeptidase that preferentially cleaves di- and tripeptides. Also has low epoxide hydrolase activity (in vitro). Can hydrolyze the epoxide leukotriene LTA(4) but it forms preferentially 5,6-dihydroxy-7,9,11,14-eicosatetraenoic acid rather than the cytokine leukotriene B(4) as the product compared to the homologous mammalian enzyme (in vitro). The protein is Leucine aminopeptidase 2 of Vanderwaltozyma polyspora (strain ATCC 22028 / DSM 70294 / BCRC 21397 / CBS 2163 / NBRC 10782 / NRRL Y-8283 / UCD 57-17) (Kluyveromyces polysporus).